A 506-amino-acid chain; its full sequence is Probable cytochrome P450 519E1 (506 aa).

Residues 1 to 21 form a helical membrane-spanning segment; sequence MGIGLIILYLLIGLLAYDFTK. Cysteine 453 serves as a coordination point for heme.

The protein belongs to the cytochrome P450 family. Requires heme as cofactor.

The protein resides in the membrane. The chain is Probable cytochrome P450 519E1 (cyp519E1) from Dictyostelium discoideum (Social amoeba).